Reading from the N-terminus, the 343-residue chain is L-threonine 3-dehydrogenase (343 aa).

Residue C40 participates in Zn(2+) binding. Catalysis depends on charge relay system residues T42 and H45. The Zn(2+) site is built by H65, E66, C95, C98, C101, and C109. Residues I177, D197, R202, 264-266, and 288-289 contribute to the NAD(+) site; these read LGI and IY.

This sequence belongs to the zinc-containing alcohol dehydrogenase family. As to quaternary structure, homotetramer. The cofactor is Zn(2+).

The protein localises to the cytoplasm. The enzyme catalyses L-threonine + NAD(+) = (2S)-2-amino-3-oxobutanoate + NADH + H(+). The protein operates within amino-acid degradation; L-threonine degradation via oxydo-reductase pathway; glycine from L-threonine: step 1/2. In terms of biological role, catalyzes the NAD(+)-dependent oxidation of L-threonine to 2-amino-3-ketobutyrate. In Aliivibrio fischeri (strain ATCC 700601 / ES114) (Vibrio fischeri), this protein is L-threonine 3-dehydrogenase.